The chain runs to 310 residues: tRNA-cytidine(32) 2-sulfurtransferase (310 aa).

The short motif at 45 to 50 (SGGKDS) is the PP-loop motif element. Residues Cys-120, Cys-123, and Cys-211 each contribute to the [4Fe-4S] cluster site.

It belongs to the TtcA family. In terms of assembly, homodimer. Mg(2+) serves as cofactor. It depends on [4Fe-4S] cluster as a cofactor.

The protein localises to the cytoplasm. It carries out the reaction cytidine(32) in tRNA + S-sulfanyl-L-cysteinyl-[cysteine desulfurase] + AH2 + ATP = 2-thiocytidine(32) in tRNA + L-cysteinyl-[cysteine desulfurase] + A + AMP + diphosphate + H(+). The protein operates within tRNA modification. Catalyzes the ATP-dependent 2-thiolation of cytidine in position 32 of tRNA, to form 2-thiocytidine (s(2)C32). The sulfur atoms are provided by the cysteine/cysteine desulfurase (IscS) system. The polypeptide is tRNA-cytidine(32) 2-sulfurtransferase (Shewanella baltica (strain OS155 / ATCC BAA-1091)).